A 158-amino-acid chain; its full sequence is NAD(P)H-quinone oxidoreductase subunit J, chloroplastic (158 aa).

It belongs to the complex I 30 kDa subunit family. In terms of assembly, NDH is composed of at least 16 different subunits, 5 of which are encoded in the nucleus.

It is found in the plastid. It localises to the chloroplast thylakoid membrane. It catalyses the reaction a plastoquinone + NADH + (n+1) H(+)(in) = a plastoquinol + NAD(+) + n H(+)(out). The enzyme catalyses a plastoquinone + NADPH + (n+1) H(+)(in) = a plastoquinol + NADP(+) + n H(+)(out). In terms of biological role, NDH shuttles electrons from NAD(P)H:plastoquinone, via FMN and iron-sulfur (Fe-S) centers, to quinones in the photosynthetic chain and possibly in a chloroplast respiratory chain. The immediate electron acceptor for the enzyme in this species is believed to be plastoquinone. Couples the redox reaction to proton translocation, and thus conserves the redox energy in a proton gradient. This Eucalyptus globulus subsp. globulus (Tasmanian blue gum) protein is NAD(P)H-quinone oxidoreductase subunit J, chloroplastic.